Reading from the N-terminus, the 170-residue chain is Peptidyl-prolyl cis-trans isomerase ESS1 (170 aa).

One can recognise a WW domain in the interval 9-43 (TGLPTPWTVRYSKSKKREYFFNPETKHSQWEEPEG). Residues 30-53 (NPETKHSQWEEPEGTNKDQLHKHL) are disordered. The span at 32–53 (ETKHSQWEEPEGTNKDQLHKHL) shows a compositional bias: basic and acidic residues. Residues 57–170 (PVRVRCLHIL…SGVHVIKRVG (114 aa)) enclose the PpiC domain. At Ser-161 the chain carries Phosphoserine.

The protein belongs to the PpiC/parvulin rotamase family. As to quaternary structure, interacts with the RNA polymerase II largest subunit (RPB1) and with the SIN1-RDP3 HDAC subunit SIN3.

It localises to the cytoplasm. It is found in the nucleus. The catalysed reaction is [protein]-peptidylproline (omega=180) = [protein]-peptidylproline (omega=0). With respect to regulation, inhibited by 5-hydroxy-1,4-naphthoquinone (juglone), but not by FK506 or cyclosporin A. Essential PPIase specific for phosphoserine and phosphothreonine N-terminal to the proline residue. Required for efficient pre-mRNA 3'-end processing and transcription termination, probably by inducing conformational changes by proline-directed isomerization in the C-terminal domain (CTD) of RPB1, thereby altering cofactor binding with the RNA polymerase II transcription complex. Also targets the SIN3-RPD3 histone deacetylase complex (HDAC). This Saccharomyces cerevisiae (strain ATCC 204508 / S288c) (Baker's yeast) protein is Peptidyl-prolyl cis-trans isomerase ESS1 (ESS1).